The primary structure comprises 180 residues: ATP synthase subunit b, plastid (180 aa).

The helical transmembrane segment at L27–L49 threads the bilayer.

Belongs to the ATPase B chain family. In terms of assembly, F-type ATPases have 2 components, F(1) - the catalytic core - and F(0) - the membrane proton channel. F(1) has five subunits: alpha(3), beta(3), gamma(1), delta(1), epsilon(1). F(0) has four main subunits: a(1), b(1), b'(1) and c(10-14). The alpha and beta chains form an alternating ring which encloses part of the gamma chain. F(1) is attached to F(0) by a central stalk formed by the gamma and epsilon chains, while a peripheral stalk is formed by the delta, b and b' chains.

It is found in the plastid membrane. Its function is as follows. F(1)F(0) ATP synthase produces ATP from ADP in the presence of a proton or sodium gradient. F-type ATPases consist of two structural domains, F(1) containing the extramembraneous catalytic core and F(0) containing the membrane proton channel, linked together by a central stalk and a peripheral stalk. During catalysis, ATP synthesis in the catalytic domain of F(1) is coupled via a rotary mechanism of the central stalk subunits to proton translocation. In terms of biological role, component of the F(0) channel, it forms part of the peripheral stalk, linking F(1) to F(0). The protein is ATP synthase subunit b, plastid of Cuscuta gronovii (Common dodder).